A 1267-amino-acid polypeptide reads, in one-letter code: DNA-directed RNA polymerase subunit beta (1267 aa).

Belongs to the RNA polymerase beta chain family. The RNAP catalytic core consists of 2 alpha, 1 beta, 1 beta' and 1 omega subunit. When a sigma factor is associated with the core the holoenzyme is formed, which can initiate transcription.

It catalyses the reaction RNA(n) + a ribonucleoside 5'-triphosphate = RNA(n+1) + diphosphate. In terms of biological role, DNA-dependent RNA polymerase catalyzes the transcription of DNA into RNA using the four ribonucleoside triphosphates as substrates. This Carsonella ruddii (strain PV) protein is DNA-directed RNA polymerase subunit beta (rpoB).